We begin with the raw amino-acid sequence, 115 residues long: Large ribosomal subunit protein bL20 (115 aa).

Belongs to the bacterial ribosomal protein bL20 family.

Binds directly to 23S ribosomal RNA and is necessary for the in vitro assembly process of the 50S ribosomal subunit. It is not involved in the protein synthesizing functions of that subunit. This Chlorobium phaeobacteroides (strain BS1) protein is Large ribosomal subunit protein bL20.